The chain runs to 547 residues: Glucose-6-phosphate isomerase (547 aa).

The active-site Proton donor is E352. Residues H383 and K511 contribute to the active site.

Belongs to the GPI family.

The protein localises to the cytoplasm. The catalysed reaction is alpha-D-glucose 6-phosphate = beta-D-fructose 6-phosphate. It participates in carbohydrate biosynthesis; gluconeogenesis. The protein operates within carbohydrate degradation; glycolysis; D-glyceraldehyde 3-phosphate and glycerone phosphate from D-glucose: step 2/4. Catalyzes the reversible isomerization of glucose-6-phosphate to fructose-6-phosphate. This Rhodospirillum rubrum (strain ATCC 11170 / ATH 1.1.1 / DSM 467 / LMG 4362 / NCIMB 8255 / S1) protein is Glucose-6-phosphate isomerase.